Consider the following 720-residue polypeptide: Protein unc-112 (720 aa).

2 disordered regions span residues 145-170 (DLRR…ESVG) and 210-236 (MGTL…TMRR). Residues 288–614 (WLDSSRSLME…ALPEHGIHYF (327 aa)) form the FERM domain. Residues 402–507 (VPELADYLKY…WMAACRLASR (106 aa)) enclose the PH domain.

Belongs to the kindlin family. Interacts with pat-4/ILK. Probably forms a complex with pat-4 and pat-6. Component of an integrin containing attachment complex, composed of at least pat-2, pat-3, pat-4, pat-6, unc-52, unc-97 and unc-112. Mainly expressed in muscle cells in both embryos and adults.

The protein localises to the cell membrane. It localises to the cytoplasm. It is found in the myofibril. The protein resides in the sarcomere. Its subcellular location is the m line. In terms of biological role, component of an integrin containing attachment complex, which is required for muscle development and maintenance. Probable regulator of cell-extracellular matrix adhesion. Required during initial muscle assembly to form dense bodies and M-lines. This is Protein unc-112 from Caenorhabditis elegans.